The primary structure comprises 287 residues: uncharacterized protein (287 aa).

Residues 1–44 form a disordered region; it reads MAAPRNLTGDGGARQLVKDEESPAASSAAKGLLNDDSPTGKRTK. Ser37 carries the post-translational modification Phosphoserine. 5 helical membrane passes run 55 to 75, 124 to 144, 147 to 167, 218 to 238, and 260 to 280; these read FAVF…IYLT, TFMI…FGVV, FVLV…LSKL, PIVD…LMPA, and DFKT…PALL.

It is found in the membrane. This is an uncharacterized protein from Arabidopsis thaliana (Mouse-ear cress).